A 150-amino-acid polypeptide reads, in one-letter code: Transcriptional repressor NrdR (150 aa).

Residues 3 to 34 fold into a zinc finger; sequence CPFCGQLDSKVVDSRPDKGGAAIRRRRECESC. Residues 49–139 form the ATP-cone domain; it reads PLVLKKDGRR…VYRSFKDVNE (91 aa).

Belongs to the NrdR family. The cofactor is Zn(2+).

Its function is as follows. Negatively regulates transcription of bacterial ribonucleotide reductase nrd genes and operons by binding to NrdR-boxes. The polypeptide is Transcriptional repressor NrdR (Geobacter sulfurreducens (strain ATCC 51573 / DSM 12127 / PCA)).